Here is a 149-residue protein sequence, read N- to C-terminus: Nucleoside diphosphate kinase 1 (149 aa).

Methionine 1 is subject to N-acetylmethionine. ATP contacts are provided by lysine 9, phenylalanine 57, arginine 85, threonine 91, arginine 102, and asparagine 112. Residue histidine 115 is the Pros-phosphohistidine intermediate of the active site.

It belongs to the NDK family. In terms of assembly, interacts with CAT1, CAT2 and CAT3. Mg(2+) serves as cofactor.

The protein resides in the peroxisome. It is found in the nucleus. It localises to the cytoplasm. The enzyme catalyses a 2'-deoxyribonucleoside 5'-diphosphate + ATP = a 2'-deoxyribonucleoside 5'-triphosphate + ADP. It carries out the reaction a ribonucleoside 5'-diphosphate + ATP = a ribonucleoside 5'-triphosphate + ADP. Its function is as follows. Major role in the synthesis of nucleoside triphosphates other than ATP. The ATP gamma phosphate is transferred to the NDP beta phosphate via a ping-pong mechanism, using a phosphorylated active-site intermediate. Plays a role in response to reactive oxygen species (ROS) stress. The protein is Nucleoside diphosphate kinase 1 (NDK1) of Arabidopsis thaliana (Mouse-ear cress).